A 28-amino-acid polypeptide reads, in one-letter code: Expansin-B1 (28 aa).

Residues 11 to 28 (MLLSLQGPXSLRMVSESG) form the Expansin-like CBD domain.

Belongs to the expansin family. Expansin B subfamily.

It is found in the secreted. It localises to the cell wall. Its subcellular location is the membrane. May cause loosening and extension of plant cell walls by disrupting non-covalent bonding between cellulose microfibrils and matrix glucans. This is Expansin-B1 from Pseudotsuga menziesii (Douglas-fir).